A 91-amino-acid chain; its full sequence is Small ribosomal subunit protein uS15c (91 aa).

Belongs to the universal ribosomal protein uS15 family. In terms of assembly, part of the 30S ribosomal subunit.

The protein resides in the plastid. It is found in the chloroplast. The chain is Small ribosomal subunit protein uS15c (rps15) from Phalaenopsis aphrodite subsp. formosana (Moth orchid).